Consider the following 89-residue polypeptide: MKKDIHPDYHPVVFKDSATGKQFLTRSTATSDRTVEWEDGNEYPLIVVDITSESHPFWTGAQRVMDTAGRVEKFQRRYGGMARRKKKTQ.

It belongs to the bacterial ribosomal protein bL31 family. Type B subfamily. Part of the 50S ribosomal subunit.

This chain is Large ribosomal subunit protein bL31B, found in Corynebacterium urealyticum (strain ATCC 43042 / DSM 7109).